The primary structure comprises 579 residues: V-type ATP synthase alpha chain (579 aa).

238–245 (GPFGAGKT) lines the ATP pocket.

Belongs to the ATPase alpha/beta chains family.

The catalysed reaction is ATP + H2O + 4 H(+)(in) = ADP + phosphate + 5 H(+)(out). Its function is as follows. Produces ATP from ADP in the presence of a proton gradient across the membrane. The V-type alpha chain is a catalytic subunit. This is V-type ATP synthase alpha chain from Borrelia hermsii (strain HS1 / DAH).